Reading from the N-terminus, the 342-residue chain is Cell division protein ZipA (342 aa).

The Periplasmic portion of the chain corresponds to 1–6; the sequence is MEDLQL. Residues 7–27 traverse the membrane as a helical segment; it reads VLFILGAIAIVAVLVHGFWSI. The Cytoplasmic segment spans residues 28–342; it reads RRQQPKSLKD…DYLHRIRANA (315 aa). The interval 33–57 is disordered; it reads KSLKDSPMGNFYKQQADKESPPKRV. Positions 47–57 are enriched in basic and acidic residues; sequence QADKESPPKRV.

The protein belongs to the ZipA family. In terms of assembly, interacts with FtsZ via their C-terminal domains.

The protein resides in the cell inner membrane. Its function is as follows. Essential cell division protein that stabilizes the FtsZ protofilaments by cross-linking them and that serves as a cytoplasmic membrane anchor for the Z ring. Also required for the recruitment to the septal ring of downstream cell division proteins. This is Cell division protein ZipA from Shewanella putrefaciens (strain CN-32 / ATCC BAA-453).